The sequence spans 377 residues: Tryptophan 2,3-dioxygenase (377 aa).

Substrate is bound by residues 57 to 61 (FIITH) and arginine 128. Histidine 313 provides a ligand contact to heme. Threonine 328 is a binding site for substrate.

This sequence belongs to the tryptophan 2,3-dioxygenase family. As to quaternary structure, homotetramer. Dimer of dimers. The cofactor is heme.

The catalysed reaction is L-tryptophan + O2 = N-formyl-L-kynurenine. Its pathway is amino-acid degradation; L-tryptophan degradation via kynurenine pathway; L-kynurenine from L-tryptophan: step 1/2. It participates in pigment biosynthesis; ommochrome biosynthesis. In terms of biological role, heme-dependent dioxygenase that catalyzes the oxidative cleavage of the L-tryptophan (L-Trp) pyrrole ring and converts L-tryptophan to N-formyl-L-kynurenine. Catalyzes the oxidative cleavage of the indole moiety. In Drosophila grimshawi (Hawaiian fruit fly), this protein is Tryptophan 2,3-dioxygenase.